Consider the following 158-residue polypeptide: G-protein-signaling modulator 3 (158 aa).

The interval methionine 1 to glycine 53 is disordered. Serine 33 and serine 37 each carry phosphoserine. The span at serine 33 to glycine 42 shows a compositional bias: pro residues. Positions threonine 43–glycine 53 are enriched in low complexity. 2 positions are modified to phosphoserine: serine 54 and serine 57. Threonine 60 is modified (phosphothreonine). Positions threonine 60–phenylalanine 82 constitute a GoLoco 1 domain. The tract at residues glutamine 78–arginine 97 is disordered. Residues lysine 86–proline 96 are compositionally biased toward pro residues. GoLoco domains follow at residues lysine 102–proline 124 and glycine 130–proline 153.

Its subcellular location is the cytoplasm. Its function is as follows. Interacts with subunit of G(i) alpha proteins and regulates the activation of G(i) alpha proteins. The chain is G-protein-signaling modulator 3 (Gpsm3) from Rattus norvegicus (Rat).